The primary structure comprises 128 residues: Small ribosomal subunit protein eS8 (128 aa).

The protein belongs to the eukaryotic ribosomal protein eS8 family. In terms of assembly, part of the 30S ribosomal subunit.

In Methanococcus maripaludis (strain C7 / ATCC BAA-1331), this protein is Small ribosomal subunit protein eS8.